A 171-amino-acid polypeptide reads, in one-letter code: UPF0312 protein SAR2769 (171 aa).

Belongs to the UPF0312 family.

In Staphylococcus aureus (strain MRSA252), this protein is UPF0312 protein SAR2769.